A 93-amino-acid polypeptide reads, in one-letter code: Large ribosomal subunit protein bL36m (93 aa).

The transit peptide at 1–35 directs the protein to the mitochondrion; that stretch reads MFLQTLRLTMPRMFLHMKPSPITITRACTVPSLLS.

Belongs to the bacterial ribosomal protein bL36 family. Component of the mitochondrial large ribosomal subunit (mt-LSU). Mature yeast 74S mitochondrial ribosomes consist of a small (37S) and a large (54S) subunit. The 37S small subunit contains a 15S ribosomal RNA (15S mt-rRNA) and 34 different proteins. The 54S large subunit contains a 21S rRNA (21S mt-rRNA) and 46 different proteins. bL36m has a zinc binding site.

The protein resides in the mitochondrion. In terms of biological role, component of the mitochondrial ribosome (mitoribosome), a dedicated translation machinery responsible for the synthesis of mitochondrial genome-encoded proteins, including at least some of the essential transmembrane subunits of the mitochondrial respiratory chain. The mitoribosomes are attached to the mitochondrial inner membrane and translation products are cotranslationally integrated into the membrane. bL36m may be involved in a process influencing telomere capping. The polypeptide is Large ribosomal subunit protein bL36m (RTC6) (Saccharomyces cerevisiae (strain ATCC 204508 / S288c) (Baker's yeast)).